The sequence spans 193 residues: MAAVVGKLAPSFTCKALVDGELKDVSLSDYRGKYVILFFYPMDFTFVCPTEIIAFNDRADEFHQRGCQLLACSTDSGYCHLAWNNVSRKEGGVQGMRIPMLADTNHKISRDYGVLIEDQGIALRGLFIIDDKGVLRQITINDLPVGRSVDEALRLLDAFQFTDKHGEVCPANWQPGSKTFKPSAGDLKSFMSS.

In terms of domain architecture, Thioredoxin spans 3-161 (AVVGKLAPSF…ALRLLDAFQF (159 aa)). Cys48 serves as the catalytic Cysteine sulfenic acid (-SOH) intermediate.

This sequence belongs to the peroxiredoxin family. AhpC/Prx1 subfamily. As to quaternary structure, homodimer; disulfide-linked, upon oxidation.

The catalysed reaction is a hydroperoxide + [thioredoxin]-dithiol = an alcohol + [thioredoxin]-disulfide + H2O. Its function is as follows. Thiol-specific peroxidase that catalyzes the reduction of hydrogen peroxide and organic hydroperoxides to water and alcohols, respectively. Plays a role in cell protection against oxidative stress by detoxifying peroxides and as sensor of hydrogen peroxide-mediated signaling events. The sequence is that of Thioredoxin peroxidase (TPX) from Echinococcus granulosus (Hydatid tapeworm).